The chain runs to 485 residues: MGEPGFFVTGDRAGGRSWCLRRVGMSAGWLLLEDGCEVTVGRGFGVTYQLVSKICPLMISRNHCVLKQNPEGQWTIMDNKSLNGVWLNRARLEPLRVYSIHQGDYIQLGVPLENKENAEYEYEVTEEDWETIYPCLSPKNDQMIEKNKELRTKRKFSLDELAGPGAEGPSNLKSKINKVSCESGQPVKSQGKGEVASTPSDNLDPKLTALEPSKTTGAPIYPGFPKVTEVHHEQKASNSSASQRSLQMFKVTMSRILRLKIQMQEKHEAVMNVKKQTQKGNSKKVVQMEQELQDLQSQLCAEQAQQQARVEQLEKTFQEEEQHLQGLEIAQGEKDLKQQLAQALQEHWALMEELNRSKKDFEAIIQAKNKELEQTKEEKEKMQAQKEEVLSHMNDVLENELQCIICSEYFIEAVTLNCAHSFCSYCINEWMKRKIECPICRKDIKSKTYSLVLDNCINKMVNNLSSEVKERRIVLIRERKAKRLF.

Residues Val38–Leu92 enclose the FHA domain. Residues Gln68–Gly72 are required for interaction with PIWIL1. Ser157 bears the Phosphoserine mark. The disordered stretch occupies residues Cys181–Ile220. The RING-type zinc finger occupies Cys403–Arg441.

It belongs to the RNF8 family. In terms of assembly, homodimer. Forms a E2-E3 ubiquitin ligase complex composed of the RNF8 homodimer and a E2 heterodimer of UBE2N and UBE2V2. Interacts with class III E2s, including UBE2E1, UBE2E2, and UBE2E3 and with UBE2N. Interacts with RXRA. Interacts (via FHA domain) with ATM-phosphorylated MDC1. Interacts (via FHA domain) with 'Thr-4827' phosphorylated HERC2 (via C-terminus). Interacts with PIWIL1; leading to sequester RNF8 in the cytoplasm. Interacts with WRAP53/TCAB1. (Microbial infection) Interacts (via FHA domain) with phosphorylated human herpesvirus 1 ICP0 protein; leading to RNF8 degradation by the proteasome. In terms of processing, autoubiquitinated through 'Lys-48' and 'Lys-63' of ubiquitin. 'Lys-63' polyubiquitination is mediated by UBE2N. 'Lys-29'-type polyubiquitination is also observed, but it doesn't require its own functional RING-type zinc finger. In terms of tissue distribution, ubiquitous. In fetal tissues, highest expression in brain, thymus and liver. In adult tissues, highest levels in brain and testis, lowest levels in peripheral blood cells.

It is found in the nucleus. The protein resides in the cytoplasm. It localises to the midbody. Its subcellular location is the chromosome. The protein localises to the telomere. It catalyses the reaction S-ubiquitinyl-[E2 ubiquitin-conjugating enzyme]-L-cysteine + [acceptor protein]-L-lysine = [E2 ubiquitin-conjugating enzyme]-L-cysteine + N(6)-ubiquitinyl-[acceptor protein]-L-lysine.. The protein operates within protein modification; protein ubiquitination. Its function is as follows. E3 ubiquitin-protein ligase that plays a key role in DNA damage signaling via 2 distinct roles: by mediating the 'Lys-63'-linked ubiquitination of histones H2A and H2AX and promoting the recruitment of DNA repair proteins at double-strand breaks (DSBs) sites, and by catalyzing 'Lys-48'-linked ubiquitination to remove target proteins from DNA damage sites. Following DNA DSBs, it is recruited to the sites of damage by ATM-phosphorylated MDC1 and catalyzes the 'Lys-63'-linked ubiquitination of histones H2A and H2AX, thereby promoting the formation of TP53BP1 and BRCA1 ionizing radiation-induced foci (IRIF). Also controls the recruitment of UIMC1-BRCC3 (RAP80-BRCC36) and PAXIP1/PTIP to DNA damage sites. Promotes the recruitment of NBN to DNA damage sites by catalyzing 'Lys-6'-linked ubiquitination of NBN. Also recruited at DNA interstrand cross-links (ICLs) sites and catalyzes 'Lys-63'-linked ubiquitination of histones H2A and H2AX, leading to recruitment of FAAP20/C1orf86 and Fanconi anemia (FA) complex, followed by interstrand cross-link repair. H2A ubiquitination also mediates the ATM-dependent transcriptional silencing at regions flanking DSBs in cis, a mechanism to avoid collision between transcription and repair intermediates. Promotes the formation of 'Lys-63'-linked polyubiquitin chains via interactions with the specific ubiquitin-conjugating UBE2N/UBC13 and ubiquitinates non-histone substrates such as PCNA. Substrates that are polyubiquitinated at 'Lys-63' are usually not targeted for degradation. Also catalyzes the formation of 'Lys-48'-linked polyubiquitin chains via interaction with the ubiquitin-conjugating UBE2L6/UBCH8, leading to degradation of substrate proteins such as CHEK2, JMJD2A/KDM4A and KU80/XRCC5: it is still unclear how the preference toward 'Lys-48'- versus 'Lys-63'-linked ubiquitination is regulated but it could be due to RNF8 ability to interact with specific E2 specific ligases. For instance, interaction with phosphorylated HERC2 promotes the association between RNF8 and UBE2N/UBC13 and favors the specific formation of 'Lys-63'-linked ubiquitin chains. Promotes non-homologous end joining (NHEJ) by promoting the 'Lys-48'-linked ubiquitination and degradation the of KU80/XRCC5. Following DNA damage, mediates the ubiquitination and degradation of JMJD2A/KDM4A in collaboration with RNF168, leading to unmask H4K20me2 mark and promote the recruitment of TP53BP1 at DNA damage sites. Following DNA damage, mediates the ubiquitination and degradation of POLD4/p12, a subunit of DNA polymerase delta. In the absence of POLD4, DNA polymerase delta complex exhibits higher proofreading activity. In addition to its function in damage signaling, also plays a role in higher-order chromatin structure by mediating extensive chromatin decondensation. Involved in the activation of ATM by promoting histone H2B ubiquitination, which indirectly triggers histone H4 'Lys-16' acetylation (H4K16ac), establishing a chromatin environment that promotes efficient activation of ATM kinase. Required in the testis, where it plays a role in the replacement of histones during spermatogenesis. At uncapped telomeres, promotes the joining of deprotected chromosome ends by inducing H2A ubiquitination and TP53BP1 recruitment, suggesting that it may enhance cancer development by aggravating telomere-induced genome instability in case of telomeric crisis. Promotes the assembly of RAD51 at DNA DSBs in the absence of BRCA1 and TP53BP1 Also involved in class switch recombination in immune system, via its role in regulation of DSBs repair. May be required for proper exit from mitosis after spindle checkpoint activation and may regulate cytokinesis. May play a role in the regulation of RXRA-mediated transcriptional activity. Not involved in RXRA ubiquitination by UBE2E2. This chain is E3 ubiquitin-protein ligase RNF8, found in Homo sapiens (Human).